The sequence spans 441 residues: Methylenetetrahydrofolate--tRNA-(uracil-5-)-methyltransferase TrmFO (441 aa).

Residue 10 to 15 (GAGLAG) coordinates FAD.

The protein belongs to the MnmG family. TrmFO subfamily. FAD is required as a cofactor.

It localises to the cytoplasm. It carries out the reaction uridine(54) in tRNA + (6R)-5,10-methylene-5,6,7,8-tetrahydrofolate + NADH + H(+) = 5-methyluridine(54) in tRNA + (6S)-5,6,7,8-tetrahydrofolate + NAD(+). It catalyses the reaction uridine(54) in tRNA + (6R)-5,10-methylene-5,6,7,8-tetrahydrofolate + NADPH + H(+) = 5-methyluridine(54) in tRNA + (6S)-5,6,7,8-tetrahydrofolate + NADP(+). In terms of biological role, catalyzes the folate-dependent formation of 5-methyl-uridine at position 54 (M-5-U54) in all tRNAs. The protein is Methylenetetrahydrofolate--tRNA-(uracil-5-)-methyltransferase TrmFO of Desulforamulus reducens (strain ATCC BAA-1160 / DSM 100696 / MI-1) (Desulfotomaculum reducens).